The sequence spans 733 residues: Sulfate transporter (733 aa).

Basic and acidic residues predominate over residues 1–18 (MSLKNEEQNDLSPKDSVK). The disordered stretch occupies residues 1 to 37 (MSLKNEEQNDLSPKDSVKGNDQYRAPSGIHLEREEES). Phosphoserine occurs at positions 12 and 16. Helical transmembrane passes span 113 to 133 (VMSG…YSLL) and 138 to 158 (PIYG…LGTS). N-linked (GlcNAc...) asparagine glycosylation occurs at N194. A run of 6 helical transmembrane segments spans residues 214–234 (IIVG…MGFF), 237–257 (GFVS…GASF), 379–399 (IDAI…SEMF), 415–435 (AIGF…SAAL), 453–473 (VMTA…FFSL), and 519–539 (LIST…CVIL). The STAS domain occupies 563–714 (AYKNLQAKSG…SVYEAMTFAE (152 aa)).

This sequence belongs to the SLC26A/SulP transporter (TC 2.A.53) family. N-glycosylated.

It is found in the cell membrane. Its subcellular location is the apical cell membrane. It carries out the reaction oxalate(in) + sulfate(out) = oxalate(out) + sulfate(in). The catalysed reaction is sulfate(out) + 2 chloride(in) = sulfate(in) + 2 chloride(out). The enzyme catalyses oxalate(out) + 2 chloride(in) = oxalate(in) + 2 chloride(out). It catalyses the reaction bromide(in) + chloride(out) = bromide(out) + chloride(in). It carries out the reaction nitrate(in) + chloride(out) = nitrate(out) + chloride(in). The catalysed reaction is iodide(in) + chloride(out) = iodide(out) + chloride(in). Its function is as follows. Sulfate transporter which mediates sulfate uptake into chondrocytes in order to maintain adequate sulfation of proteoglycans which is needed for cartilage development. Mediates electroneutral anion exchange of sulfate ions for oxalate ions, sulfate and oxalate ions for chloride and/or hydroxyl ions and chloride ions for bromide, iodide and nitrate ions. The coupling of sulfate transport to both hydroxyl and chloride ions likely serves to ensure transport at both acidic pH when most sulfate uptake is mediated by sulfate-hydroxide exchange and alkaline pH when most sulfate uptake is mediated by sulfate-chloride exchange. Essential for chondrocyte proliferation, differentiation and cell size expansion. The polypeptide is Sulfate transporter (SLC26A2) (Bubalus bubalis (Domestic water buffalo)).